Here is a 260-residue protein sequence, read N- to C-terminus: tRNA pseudouridine synthase A (260 aa).

The Nucleophile role is filled by D60. Position 118 (Y118) interacts with substrate.

It belongs to the tRNA pseudouridine synthase TruA family. In terms of assembly, homodimer.

The catalysed reaction is uridine(38/39/40) in tRNA = pseudouridine(38/39/40) in tRNA. In terms of biological role, formation of pseudouridine at positions 38, 39 and 40 in the anticodon stem and loop of transfer RNAs. The sequence is that of tRNA pseudouridine synthase A from Leuconostoc citreum (strain KM20).